The primary structure comprises 90 residues: Probable Fe(2+)-trafficking protein (90 aa).

This sequence belongs to the Fe(2+)-trafficking protein family.

Could be a mediator in iron transactions between iron acquisition and iron-requiring processes, such as synthesis and/or repair of Fe-S clusters in biosynthetic enzymes. The polypeptide is Probable Fe(2+)-trafficking protein (Haemophilus influenzae (strain PittEE)).